Consider the following 652-residue polypeptide: tRNA 5-methylaminomethyl-2-thiouridine biosynthesis bifunctional protein MnmC (652 aa).

Positions 1-235 (MPDRLVPATL…EPALRVGEYA (235 aa)) are tRNA (mnm(5)s(2)U34)-methyltransferase. The FAD-dependent cmnm(5)s(2)U34 oxidoreductase stretch occupies residues 259-652 (IGAGLAGCAV…IRALRGRQIG (394 aa)).

In the N-terminal section; belongs to the methyltransferase superfamily. tRNA (mnm(5)s(2)U34)-methyltransferase family. This sequence in the C-terminal section; belongs to the DAO family. It depends on FAD as a cofactor.

Its subcellular location is the cytoplasm. It carries out the reaction 5-aminomethyl-2-thiouridine(34) in tRNA + S-adenosyl-L-methionine = 5-methylaminomethyl-2-thiouridine(34) in tRNA + S-adenosyl-L-homocysteine + H(+). Catalyzes the last two steps in the biosynthesis of 5-methylaminomethyl-2-thiouridine (mnm(5)s(2)U) at the wobble position (U34) in tRNA. Catalyzes the FAD-dependent demodification of cmnm(5)s(2)U34 to nm(5)s(2)U34, followed by the transfer of a methyl group from S-adenosyl-L-methionine to nm(5)s(2)U34, to form mnm(5)s(2)U34. This is tRNA 5-methylaminomethyl-2-thiouridine biosynthesis bifunctional protein MnmC from Burkholderia ambifaria (strain ATCC BAA-244 / DSM 16087 / CCUG 44356 / LMG 19182 / AMMD) (Burkholderia cepacia (strain AMMD)).